The chain runs to 255 residues: Urease accessory protein UreD 1 (255 aa).

The protein belongs to the UreD family. As to quaternary structure, ureD, UreF and UreG form a complex that acts as a GTP-hydrolysis-dependent molecular chaperone, activating the urease apoprotein by helping to assemble the nickel containing metallocenter of UreC. The UreE protein probably delivers the nickel.

It is found in the cytoplasm. Required for maturation of urease via the functional incorporation of the urease nickel metallocenter. This chain is Urease accessory protein UreD 1, found in Saccharopolyspora erythraea (strain ATCC 11635 / DSM 40517 / JCM 4748 / NBRC 13426 / NCIMB 8594 / NRRL 2338).